Consider the following 223-residue polypeptide: Putative UPF0607 protein LOC392364 (223 aa).

Over residues 110–138 the composition is skewed to basic and acidic residues; that stretch reads KMEVRAEEPKEATEVKDQVETQEQEDNKR. Residues 110–223 form a disordered region; that stretch reads KMEVRAEEPK…GRTPPARQHG (114 aa). Polar residues-rich tracts occupy residues 145–163 and 174–186; these read EAAS…TSPR and QLKS…QTDK.

The protein belongs to the UPF0607 family.

The chain is Putative UPF0607 protein LOC392364 from Homo sapiens (Human).